The sequence spans 368 residues: Chaperone protein DnaJ (368 aa).

Residues 5-70 (DYYEVLGVSK…EKRSMYDRMG (66 aa)) form the J domain. A CR-type zinc finger spans residues 132–210 (GVKKTITFTA…CHGSGVADRQ (79 aa)). The Zn(2+) site is built by C145, C148, C162, C165, C184, C187, C198, and C201. CXXCXGXG motif repeat units lie at residues 145 to 152 (CEVCDGKG), 162 to 169 (CRTCHGTG), 184 to 191 (CGTCRGQG), and 198 to 205 (CQSCHGSG). The disordered stretch occupies residues 349–368 (DGDEHSSSPKKKSFFDRLFD). The segment covering 350–368 (GDEHSSSPKKKSFFDRLFD) has biased composition (basic and acidic residues).

This sequence belongs to the DnaJ family. In terms of assembly, homodimer. Zn(2+) is required as a cofactor.

The protein localises to the cytoplasm. In terms of biological role, participates actively in the response to hyperosmotic and heat shock by preventing the aggregation of stress-denatured proteins and by disaggregating proteins, also in an autonomous, DnaK-independent fashion. Unfolded proteins bind initially to DnaJ; upon interaction with the DnaJ-bound protein, DnaK hydrolyzes its bound ATP, resulting in the formation of a stable complex. GrpE releases ADP from DnaK; ATP binding to DnaK triggers the release of the substrate protein, thus completing the reaction cycle. Several rounds of ATP-dependent interactions between DnaJ, DnaK and GrpE are required for fully efficient folding. Also involved, together with DnaK and GrpE, in the DNA replication of plasmids through activation of initiation proteins. The polypeptide is Chaperone protein DnaJ (Acinetobacter baylyi (strain ATCC 33305 / BD413 / ADP1)).